We begin with the raw amino-acid sequence, 273 residues long: Multivesicular body subunit 12A (273 aa).

Positions 9–151 (GMPLAGLAWS…GFAIWCRKAK (143 aa)) constitute an MABP domain. At T130 the chain carries Phosphothreonine. The disordered stretch occupies residues 154 to 186 (RPVPKPRALSRDVRDLSLDSPGQPSKGGFPERT). The SH3-binding motif lies at 155-160 (PVPKPR). Phosphoserine is present on residues S163, S170, S195, and S202. The segment at 192 to 273 (SRASTLRRND…AAARLPPSVS (82 aa)) is interaction with TSG101, VPS37B and VPS28. The residue at position 204 (Y204) is a Phosphotyrosine. The residue at position 207 (S207) is a Phosphoserine. The UMA domain occupies 215–265 (MDGVPFTLHPRFEGKSCGPLAFSAFADLTIKSLADIEAEYNYGFVVEKTAA).

This sequence belongs to the MVB12 family. As to quaternary structure, component of the ESCRT-I complex (endosomal sorting complex required for transport I) which consists of TSG101, VPS28, a VPS37 protein (VPS37A to -D) and MVB12A or MVB12B in a 1:1:1:1 stoichiometry. Interacts with CD2AP and CIN85/SH3KBP1. Interacts with CD2AP (via one of the SH3 domains). Interacts with TSG101; the association appears to be mediated by the TSG101-VPS37 binary subcomplex. Interacts with VPS28. Interacts with VPS37B; the association appears to be mediated by the TSG101-VPS37 binary subcomplex. Interacts with VPS37C; the association appears to be mediated by the TSG101-VPS37 binary subcomplex. Interacts with VPS37D; the association appears to be mediated by the TSG101-VPS37 binary subcomplex. Interacts with CEP55. Post-translationally, phosphorylated on Tyr-204 upon EGF stimulation. Phosphorylation is required for interaction with CD2AP and CIN85/SH3KBP1.

The protein resides in the cytoplasm. The protein localises to the cytoskeleton. Its subcellular location is the nucleus. It localises to the endosome. It is found in the microtubule organizing center. The protein resides in the centrosome. The protein localises to the late endosome membrane. In terms of biological role, component of the ESCRT-I complex, a regulator of vesicular trafficking process. Required for the sorting of endocytic ubiquitinated cargos into multivesicular bodies. May be involved in the ligand-mediated internalization and down-regulation of EGF receptor. The sequence is that of Multivesicular body subunit 12A (MVB12A) from Bos taurus (Bovine).